We begin with the raw amino-acid sequence, 443 residues long: Xaa-Pro dipeptidase (443 aa).

Asp-241, Asp-252, His-333, Glu-378, and Glu-417 together coordinate Mn(2+).

This sequence belongs to the peptidase M24B family. Bacterial-type prolidase subfamily. Mn(2+) serves as cofactor.

It carries out the reaction Xaa-L-Pro dipeptide + H2O = an L-alpha-amino acid + L-proline. In terms of biological role, splits dipeptides with a prolyl residue in the C-terminal position. This chain is Xaa-Pro dipeptidase, found in Actinobacillus pleuropneumoniae serotype 5b (strain L20).